The sequence spans 278 residues: Elongation factor Ts (278 aa).

Residues 82-85 form an involved in Mg(2+) ion dislocation from EF-Tu region; it reads TEPV.

Belongs to the EF-Ts family.

It is found in the cytoplasm. Its function is as follows. Associates with the EF-Tu.GDP complex and induces the exchange of GDP to GTP. It remains bound to the aminoacyl-tRNA.EF-Tu.GTP complex up to the GTP hydrolysis stage on the ribosome. The polypeptide is Elongation factor Ts (Cytophaga hutchinsonii (strain ATCC 33406 / DSM 1761 / CIP 103989 / NBRC 15051 / NCIMB 9469 / D465)).